Consider the following 359-residue polypeptide: Histidinol-phosphate aminotransferase (359 aa).

Residue lysine 217 is modified to N6-(pyridoxal phosphate)lysine.

It belongs to the class-II pyridoxal-phosphate-dependent aminotransferase family. Histidinol-phosphate aminotransferase subfamily. Homodimer. Requires pyridoxal 5'-phosphate as cofactor.

The enzyme catalyses L-histidinol phosphate + 2-oxoglutarate = 3-(imidazol-4-yl)-2-oxopropyl phosphate + L-glutamate. Its pathway is amino-acid biosynthesis; L-histidine biosynthesis; L-histidine from 5-phospho-alpha-D-ribose 1-diphosphate: step 7/9. This is Histidinol-phosphate aminotransferase from Salmonella enteritidis PT4 (strain P125109).